Reading from the N-terminus, the 212-residue chain is Stage 0 sporulation protein A (212 aa).

Positions 5–123 (EVLLADDNRE…VLAQRIRQII (119 aa)) constitute a Response regulatory domain. Ca(2+) contacts are provided by D10, D11, and D56. A 4-aspartylphosphate modification is found at D56. The segment at residues 194–212 (PDIAKKFNTTASHVERAIR) is a DNA-binding region (H-T-H motif).

Ca(2+) is required as a cofactor. Post-translationally, phosphorylated by KinA and KinB.

The protein localises to the cytoplasm. Its function is as follows. May play the central regulatory role in sporulation. It may be an element of the effector pathway responsible for the activation of sporulation genes in response to nutritional stress. Spo0A may act in concert with Spo0H (a sigma factor) to control the expression of some genes that are critical to the sporulation process. Repressor of abrB, activator of the spoIIa operon. Binds the DNA sequence 5'-TGNCGAA-3' (0A box). The sequence is that of Stage 0 sporulation protein A (spo0A) from Brevibacillus parabrevis.